An 87-amino-acid polypeptide reads, in one-letter code: Large ribosomal subunit protein eL34 (87 aa).

The protein belongs to the eukaryotic ribosomal protein eL34 family.

In Sulfurisphaera tokodaii (strain DSM 16993 / JCM 10545 / NBRC 100140 / 7) (Sulfolobus tokodaii), this protein is Large ribosomal subunit protein eL34.